Consider the following 512-residue polypeptide: mRNA export factor (512 aa).

Residues 1-242 (MATDIDMLID…PVPERKAPSA (242 aa)) are disordered. Positions 5–17 (IDMLIDLGLDLSD) match the Nuclear export signal motif. Ser-16 and Ser-18 each carry phosphoserine; by host. Composition is skewed to acidic residues over residues 16-28 (SDSELEEDALERD) and 36-55 (PESDSSGECSSSDEDMEDPC). The tract at residues 104-112 (VWSRLGTRR) is interaction with host ALYREF. A Nuclear localization signal motif is present at residues 110-138 (TRRSASPREPHGGKVARIQPPSTKAPHPR). Ser-113 bears the Phosphoserine; by host mark. Residues 135 to 149 (PHPRGGRRGRRRGRG) show a composition bias toward basic residues. Residue Arg-138 is modified to Dimethylated arginine; by host. The interval 138 to 152 (RGGRRGRRRGRGRYG) is RGG-box. Arg-148 is subject to Omega-N-methylarginine; by host. Arg-150 is modified (dimethylated arginine; by host). The segment covering 228–240 (ADGRAPVPERKAP) has biased composition (basic and acidic residues). Positions 400, 479, 483, and 488 each coordinate Zn(2+). The segment at 400 to 488 (CYLKARGLCG…HRQECSSRVC (89 aa)) adopts a CHC2-type zinc-finger fold.

It belongs to the HHV-1 ICP27 protein family. As to quaternary structure, interacts with host RBP1; this interaction facilitates the RNA polymerase recruitment to viral transcription sites. Interacts (via the RGG box) with host ALYREF/THOC4; this interaction recruits ALYREF to viral replication compartments and probably directs viral mRNA to the TAP/NFX1 pathway. Interacts (via the RGG box) with host SRPK1; this interaction relocalizes SRPK1 to the nucleus and seems to alter its activity. Interacts with ICP4; this interaction modulates ICP4 DNA-binding activity. Interacts with host NXF1; this interaction allows efficient export of HSV-1 early and late transcripts. Interacts with host IRF3; this interaction inhibits IRF3 phosphorylation and nuclear translocation. In terms of processing, methylated within the RGG box possibly by host PRMT1. When hypomethylated, ICP27 is exported to the cytoplasm earlier and more rapidly. Phosphorylated.

The protein resides in the host cytoplasm. It localises to the host nucleus. Multifunctional regulator of the expression of viral genes that contributes to the shutoff of host protein synthesis and mediates nuclear export of viral intronless mRNAs. Also stimulates translation of viral transcripts. Independently, plays a role in the regulation of virion release. Also plays a role in the inhibition of host innate immune response by targeting host IRF3 and thereby preventing production of beta-interferon. Silences the 3' splice site of the host promyelocytic leukemia (PML) intron 7a, thereby switching PML isoforms from PML-II to PML-V. This could be linked to the accelerated mRNA export induced by ICP27 which might not provide sufficient time for PML pre-mRNA to be spliced in the nucleus. Also suppresses splicing of the viral ICP34.5 mRNA, allowing the virus to express a variant form of ICP34.5. The chain is mRNA export factor from Human herpesvirus 2 (strain HG52) (HHV-2).